The following is a 557-amino-acid chain: Hepatocyte nuclear factor 1-beta (557 aa).

The dimerization stretch occupies residues 1–31 (MVSKLTSLQQELLSALLSSGVTKEVLVQALE). Residues 1–32 (MVSKLTSLQQELLSALLSSGVTKEVLVQALEE) enclose the HNF-p1 domain. 4 positions are modified to phosphoserine: S49, S52, S75, and S80. Residues 64 to 85 (TLTNGHAKGRLSGDEGSEDGDD) form a disordered region. The 96-residue stretch at 93 to 188 (KELQALNTEE…ILRQFNQTVQ (96 aa)) folds into the POU-specific atypical domain. The homeobox; HNF1-type DNA-binding region spans 231–311 (MRRNRFKWGP…NRRKEEAFRQ (81 aa)). A disordered region spans residues 324–352 (HSLNPLLSHGSPHHQPSSSPPNKLSGVRY). Over residues 328 to 344 (PLLSHGSPHHQPSSSPP) the composition is skewed to low complexity.

Belongs to the HNF1 homeobox family. Binds DNA as a dimer. Can form homodimer or heterodimer with HNF1-alpha. Interacts (via HNF-p1 domain) with PCBD1; the interaction increases its transactivation activity.

The protein localises to the nucleus. Its function is as follows. Transcription factor that binds to the inverted palindrome 5'-GTTAATNATTAAC-3'. Binds to the FPC element in the cAMP regulatory unit of the PLAU gene. Transcriptional activity is increased by coactivator PCBD1. This Homo sapiens (Human) protein is Hepatocyte nuclear factor 1-beta (HNF1B).